Consider the following 355-residue polypeptide: Protein-glutamate methylesterase/protein-glutamine glutaminase (355 aa).

Residues 3–121 (NVLVVEDSPV…HPDHEATARK (119 aa)) enclose the Response regulatory domain. Aspartate 54 carries the post-translational modification 4-aspartylphosphate. A CheB-type methylesterase domain is found at 154–348 (PLLNRVAPAR…AALTNLVAER (195 aa)). Active-site residues include serine 170, histidine 197, and aspartate 290.

The protein belongs to the CheB family. Post-translationally, phosphorylated by CheA. Phosphorylation of the N-terminal regulatory domain activates the methylesterase activity.

Its subcellular location is the cytoplasm. The enzyme catalyses [protein]-L-glutamate 5-O-methyl ester + H2O = L-glutamyl-[protein] + methanol + H(+). The catalysed reaction is L-glutaminyl-[protein] + H2O = L-glutamyl-[protein] + NH4(+). Its function is as follows. Involved in chemotaxis. Part of a chemotaxis signal transduction system that modulates chemotaxis in response to various stimuli. Catalyzes the demethylation of specific methylglutamate residues introduced into the chemoreceptors (methyl-accepting chemotaxis proteins or MCP) by CheR. Also mediates the irreversible deamidation of specific glutamine residues to glutamic acid. This chain is Protein-glutamate methylesterase/protein-glutamine glutaminase, found in Nitrosospira multiformis (strain ATCC 25196 / NCIMB 11849 / C 71).